The chain runs to 436 residues: 3-ketoacyl-CoA thiolase (436 aa).

Cysteine 99 (acyl-thioester intermediate) is an active-site residue. Catalysis depends on proton acceptor residues histidine 392 and cysteine 422.

This sequence belongs to the thiolase-like superfamily. Thiolase family. Heterotetramer of two alpha chains (FadJ) and two beta chains (FadI).

It localises to the cytoplasm. The enzyme catalyses an acyl-CoA + acetyl-CoA = a 3-oxoacyl-CoA + CoA. The protein operates within lipid metabolism; fatty acid beta-oxidation. In terms of biological role, catalyzes the final step of fatty acid oxidation in which acetyl-CoA is released and the CoA ester of a fatty acid two carbons shorter is formed. In Shewanella sediminis (strain HAW-EB3), this protein is 3-ketoacyl-CoA thiolase.